Here is a 125-residue protein sequence, read N- to C-terminus: Linear element protein rec27 (125 aa).

Residues 45–104 (KTNIENEKKAFIKDVSQVQQKIKEFEIQKANQIKQLNEEKLSIEARKQQLEIEIRNQLLQ) adopt a coiled-coil conformation.

In terms of assembly, component of linear elements (LinEs), which are similar to synaptonemal complexes, at least composed of rec27, rec25, rec10 and mug20.

It localises to the cytoplasm. It is found in the nucleus. The protein localises to the chromosome. In terms of biological role, during meiotic DNA recombination, binds to and activates DNA double-strand break (DSB) hotspot sites. In Schizosaccharomyces pombe (strain 972 / ATCC 24843) (Fission yeast), this protein is Linear element protein rec27.